The chain runs to 128 residues: Riboflavin kinase (128 aa).

Residue 12–17 (GKGEGK) participates in CDP binding. Mg(2+) is bound by residues T41 and N43. FMN contacts are provided by T97 and E105. Position 110-113 (110-113 (IKLR)) interacts with CDP.

It belongs to the archaeal riboflavin kinase family. The cofactor is Mg(2+).

The catalysed reaction is riboflavin + CTP = CDP + FMN + H(+). Its pathway is cofactor biosynthesis; FMN biosynthesis; FMN from riboflavin (CTP route): step 1/1. Catalyzes the CTP-dependent phosphorylation of riboflavin (vitamin B2) to form flavin mononucleotide (FMN). The polypeptide is Riboflavin kinase (Methanococcus aeolicus (strain ATCC BAA-1280 / DSM 17508 / OCM 812 / Nankai-3)).